Here is a 209-residue protein sequence, read N- to C-terminus: Probable glutathione peroxidase 8 (209 aa).

N-acetylmethionine is present on Met-1. A helical membrane pass occupies residues 18-40; that stretch reads VFAVLLSIVLCTVTLFLLQLKFL. The active site involves Cys-79.

The protein belongs to the glutathione peroxidase family.

Its subcellular location is the membrane. It carries out the reaction 2 glutathione + H2O2 = glutathione disulfide + 2 H2O. This Homo sapiens (Human) protein is Probable glutathione peroxidase 8 (GPX8).